A 183-amino-acid polypeptide reads, in one-letter code: Dual-action ribosomal maturation protein DarP (183 aa).

Belongs to the DarP family.

It is found in the cytoplasm. Functionally, member of a network of 50S ribosomal subunit biogenesis factors which assembles along the 30S-50S interface, preventing incorrect 23S rRNA structures from forming. Promotes peptidyl transferase center (PTC) maturation. The polypeptide is Dual-action ribosomal maturation protein DarP (Salmonella enteritidis PT4 (strain P125109)).